Reading from the N-terminus, the 249-residue chain is Isoamyl acetate-hydrolyzing esterase 1 homolog (249 aa).

Catalysis depends on Ser24, which acts as the Nucleophile. At Lys63 the chain carries N6-succinyllysine. Asp197 functions as the Proton donor in the catalytic mechanism. Catalysis depends on His200, which acts as the Proton acceptor.

This sequence belongs to the 'GDSL' lipolytic enzyme family. IAH1 subfamily.

Its function is as follows. Probable lipase. The protein is Isoamyl acetate-hydrolyzing esterase 1 homolog (IAH1) of Bos taurus (Bovine).